Reading from the N-terminus, the 243-residue chain is 4-hydroxy-tetrahydrodipicolinate reductase (243 aa).

NAD(+) contacts are provided by residues 9–14, 78–80, and 104–107; these read GANGKM, GTS, and APNF. The active-site Proton donor/acceptor is His134. His135 serves as a coordination point for (S)-2,3,4,5-tetrahydrodipicolinate. The active-site Proton donor is Lys138. 144–145 contributes to the (S)-2,3,4,5-tetrahydrodipicolinate binding site; sequence GT.

It belongs to the DapB family.

The protein localises to the cytoplasm. It catalyses the reaction (S)-2,3,4,5-tetrahydrodipicolinate + NAD(+) + H2O = (2S,4S)-4-hydroxy-2,3,4,5-tetrahydrodipicolinate + NADH + H(+). The enzyme catalyses (S)-2,3,4,5-tetrahydrodipicolinate + NADP(+) + H2O = (2S,4S)-4-hydroxy-2,3,4,5-tetrahydrodipicolinate + NADPH + H(+). The protein operates within amino-acid biosynthesis; L-lysine biosynthesis via DAP pathway; (S)-tetrahydrodipicolinate from L-aspartate: step 4/4. In terms of biological role, catalyzes the conversion of 4-hydroxy-tetrahydrodipicolinate (HTPA) to tetrahydrodipicolinate. This is 4-hydroxy-tetrahydrodipicolinate reductase from Legionella pneumophila subsp. pneumophila (strain Philadelphia 1 / ATCC 33152 / DSM 7513).